The chain runs to 409 residues: Wadjet protein JetD (409 aa).

Its function is as follows. Component of antiplasmid transformation system Wadjet type I, composed of JetA, JetB, JetC and JetD. Expression of Wadjet type I in B.subtilis (strain BEST7003) reduces the transformation efficiency of plasmid pHCMC05. The polypeptide is Wadjet protein JetD (Bacillus cereus (strain Q1)).